Here is a 513-residue protein sequence, read N- to C-terminus: 2,3-bisphosphoglycerate-independent phosphoglycerate mutase (513 aa).

2 residues coordinate Mn(2+): D12 and S62. The Phosphoserine intermediate role is filled by S62. Substrate is bound by residues H123, 153-154 (RD), R185, R191, 260-263 (RPDR), and K333. 5 residues coordinate Mn(2+): D400, H404, D441, H442, and H460.

Belongs to the BPG-independent phosphoglycerate mutase family. As to quaternary structure, monomer. Requires Mn(2+) as cofactor.

The enzyme catalyses (2R)-2-phosphoglycerate = (2R)-3-phosphoglycerate. It participates in carbohydrate degradation; glycolysis; pyruvate from D-glyceraldehyde 3-phosphate: step 3/5. Functionally, catalyzes the interconversion of 2-phosphoglycerate and 3-phosphoglycerate. The chain is 2,3-bisphosphoglycerate-independent phosphoglycerate mutase from Clostridium tetani (strain Massachusetts / E88).